Reading from the N-terminus, the 365-residue chain is MALNTIDELIEDIRQGKMVILMDDEDRENEGDLIMAAECVRTEDINFMVKHARGLVCMPMTRERCERLGLPLMVQRNGSGFGTKFTVSIEAAEGVTTGISAADRARTVQAAAAKNAVAADIVSPGHIFPLMAQPGGTLARAGHTEAACDLARMAGFEPSGVICEVMNDDGSMARRPELEAFAAEHGIKIGTIADLIHYRLIHERTVERIAEQPLDSELGHFNLITYRDSVEGDVHLALTLGKVCAEEPTLVRVHNMDPLRDLLQVNQPGRWSLRAAMTKVAEAGSGVVLLLGHQIGGDDLLAHVREIASAPAPAPKATTTYSTVGAGSQILRDLGVRKMRLLSAPMRFNAISGFDLEVVEYLPAE.

The DHBP synthase stretch occupies residues 1–201; that stretch reads MALNTIDELI…IADLIHYRLI (201 aa). D-ribulose 5-phosphate contacts are provided by residues 27-28, Asp-32, 140-144, and Glu-164; these read RE and RAGHT. Glu-28 contributes to the Mg(2+) binding site. Residue His-143 participates in Mg(2+) binding. The GTP cyclohydrolase II-like stretch occupies residues 202-365; that stretch reads HERTVERIAE…LEVVEYLPAE (164 aa).

It in the N-terminal section; belongs to the DHBP synthase family. The protein in the C-terminal section; belongs to the GTP cyclohydrolase II family. It depends on Mg(2+) as a cofactor. Requires Mn(2+) as cofactor.

It catalyses the reaction D-ribulose 5-phosphate = (2S)-2-hydroxy-3-oxobutyl phosphate + formate + H(+). Its pathway is cofactor biosynthesis; riboflavin biosynthesis; 2-hydroxy-3-oxobutyl phosphate from D-ribulose 5-phosphate: step 1/1. Its function is as follows. Catalyzes the conversion of D-ribulose 5-phosphate to formate and 3,4-dihydroxy-2-butanone 4-phosphate. This chain is 3,4-dihydroxy-2-butanone 4-phosphate synthase (ribB), found in Pseudomonas aeruginosa (strain ATCC 15692 / DSM 22644 / CIP 104116 / JCM 14847 / LMG 12228 / 1C / PRS 101 / PAO1).